The primary structure comprises 51 residues: MSHNTKGQKIRLAKAHNQNQRVPTWVIIKTNRKVVSHPKRRHWRRNSLDVK.

It belongs to the eukaryotic ribosomal protein eL39 family.

This is Large ribosomal subunit protein eL39 from Methanococcoides burtonii (strain DSM 6242 / NBRC 107633 / OCM 468 / ACE-M).